Here is a 194-residue protein sequence, read N- to C-terminus: Ribose 1,5-bisphosphate phosphokinase PhnN (194 aa).

24 to 31 is a binding site for ATP; it reads GPSGAGKD.

The protein belongs to the ribose 1,5-bisphosphokinase family.

It carries out the reaction alpha-D-ribose 1,5-bisphosphate + ATP = 5-phospho-alpha-D-ribose 1-diphosphate + ADP. The protein operates within metabolic intermediate biosynthesis; 5-phospho-alpha-D-ribose 1-diphosphate biosynthesis; 5-phospho-alpha-D-ribose 1-diphosphate from D-ribose 5-phosphate (route II): step 3/3. Its function is as follows. Catalyzes the phosphorylation of ribose 1,5-bisphosphate to 5-phospho-D-ribosyl alpha-1-diphosphate (PRPP). The sequence is that of Ribose 1,5-bisphosphate phosphokinase PhnN from Rhodopseudomonas palustris (strain ATCC BAA-98 / CGA009).